The primary structure comprises 90 residues: Probable Fe(2+)-trafficking protein (90 aa).

It belongs to the Fe(2+)-trafficking protein family.

In terms of biological role, could be a mediator in iron transactions between iron acquisition and iron-requiring processes, such as synthesis and/or repair of Fe-S clusters in biosynthetic enzymes. In Pseudoalteromonas translucida (strain TAC 125), this protein is Probable Fe(2+)-trafficking protein.